A 1315-amino-acid chain; its full sequence is Myopalladin (1315 aa).

4 disordered regions span residues S19–D60, I81–K145, H166–R204, and E230–P266. Composition is skewed to basic and acidic residues over residues E23–A35 and D84–K104. Phosphoserine occurs at positions 99 and 129. The span at H166–K180 shows a compositional bias: basic residues. Residues E184–D199 are compositionally biased toward polar residues. A coiled-coil region spans residues D219 to A240. T249 is modified (phosphothreonine). Residues P267–E357 enclose the Ig-like 1 domain. C288 and C339 form a disulfide bridge. Residues V359–I392 form a disordered region. The Ig-like 2 domain occupies P432–D528. A disulfide bond links C453 and C512. Disordered regions lie at residues I535–K652, L674–Q704, and S725–Q747. The segment covering S609–N623 has biased composition (polar residues). S641 is modified (phosphoserine). Residues S725 to T741 are compositionally biased toward low complexity. The residue at position 754 (S754) is a Phosphoserine. Disordered stretches follow at residues H762 to S814 and N840 to Q865. Residues P779–P790 are compositionally biased toward pro residues. A phosphoserine mark is found at S809 and S814. S903 and S924 each carry phosphoserine. 3 Ig-like domains span residues P941 to S1025, P1068 to T1157, and P1167 to D1257. C1089 and C1141 are disulfide-bonded.

The protein belongs to the myotilin/palladin family. In terms of assembly, interacts with TTN/titin, NEB, NEBL, ACTN2 and CARP.

Its subcellular location is the cytoplasm. It localises to the nucleus. The protein localises to the myofibril. It is found in the sarcomere. The protein resides in the z line. Functionally, component of the sarcomere that tethers together nebulin (skeletal muscle) and nebulette (cardiac muscle) to alpha-actinin, at the Z lines. In Mus musculus (Mouse), this protein is Myopalladin (Mypn).